The sequence spans 207 residues: MSRYRGPRLRIIRRLQNLPGLTNKLVESKKNKVSGSDQSIQKKVSQYGIRLEAKQRLRFNYGLTERQLLNYVRIARCAKGSTGQILLQLLEMRLDNILFRLGFVPTIPSARQLINHRHILVNNRIVDVPSFHCKPKDIITIGAPKTYQSILSKRIESFAKDQIPEHLTLSLSEPKKPKGFVNYLINRESIGLKINELLVVEYYSRKA.

Residues 92-155 (MRLDNILFRL…TYQSILSKRI (64 aa)) enclose the S4 RNA-binding domain.

This sequence belongs to the universal ribosomal protein uS4 family. As to quaternary structure, part of the 30S ribosomal subunit. Contacts protein S5. The interaction surface between S4 and S5 is involved in control of translational fidelity.

Its subcellular location is the plastid. The protein localises to the chloroplast. Functionally, one of the primary rRNA binding proteins, it binds directly to 16S rRNA where it nucleates assembly of the body of the 30S subunit. In terms of biological role, with S5 and S12 plays an important role in translational accuracy. The chain is Small ribosomal subunit protein uS4c (rps4) from Equisetum giganteum (Giant horsetail).